A 94-amino-acid polypeptide reads, in one-letter code: Large ribosomal subunit protein bL27 (94 aa).

A propeptide spanning residues 1-9 is cleaved from the precursor; the sequence is MLRLDLQFF.

It belongs to the bacterial ribosomal protein bL27 family. The N-terminus is cleaved by ribosomal processing cysteine protease Prp.

The polypeptide is Large ribosomal subunit protein bL27 (Bacillus velezensis (strain DSM 23117 / BGSC 10A6 / LMG 26770 / FZB42) (Bacillus amyloliquefaciens subsp. plantarum)).